The sequence spans 561 residues: Transmembrane protein 151B (561 aa).

Residues 1 to 10 (MSPPGSAAGE) show a composition bias toward low complexity. The tract at residues 1–42 (MSPPGSAAGESAGGGGGGGGSGVPEEPMASADEGPAREEQRP) is disordered. Gly residues predominate over residues 11 to 22 (SAGGGGGGGGSG). 2 helical membrane-spanning segments follow: residues 59–79 (CLLL…CHVT) and 106–126 (YVYI…VECW). Positions 489-507 (VNEASCPTEQTRLSSQASM) are enriched in polar residues. The segment at 489–523 (VNEASCPTEQTRLSSQASMRDNEEDEDEEEAGPPP) is disordered. Acidic residues predominate over residues 510–519 (NEEDEDEEEA).

It belongs to the TMEM151 family.

The protein localises to the membrane. The polypeptide is Transmembrane protein 151B (Tmem151b) (Mus musculus (Mouse)).